The following is a 539-amino-acid chain: Tripartite motif-containing protein 26 (539 aa).

The RING-type zinc finger occupies C16 to K57. The segment at Q97–M138 adopts a B box-type zinc-finger fold. C102, H105, C124, and H130 together coordinate Zn(2+). A coiled-coil region spans residues I188–R227. The B30.2/SPRY domain maps to R295–P539. A disordered region spans residues R376–C437. Acidic residues predominate over residues S380–L434.

This sequence belongs to the TRIM/RBCC family. Interacts with TBK1; this interaction bridges together TBK1 and NEMO in order to activate TBK1. Interacts with INCA1. Autoubiquitinates upon viral infection. In turn, autoubiquitinated TRIM26 recruits NEMO and bridges TBK1-NEMO interaction.

It is found in the cytoplasm. The protein localises to the nucleus. The catalysed reaction is S-ubiquitinyl-[E2 ubiquitin-conjugating enzyme]-L-cysteine + [acceptor protein]-L-lysine = [E2 ubiquitin-conjugating enzyme]-L-cysteine + N(6)-ubiquitinyl-[acceptor protein]-L-lysine.. In terms of biological role, E3 ubiquitin-protein ligase which regulates the IFN-beta production and antiviral response downstream of various DNA-encoded pattern-recognition receptors (PRRs). Also plays a central role in determining the response to different forms of oxidative stress by controlling levels of DNA glycosylases NEIL1, NEIL3 and NTH1 that are involved in repair of damaged DNA. Promotes nuclear IRF3 ubiquitination and proteasomal degradation. Bridges together TBK1 and NEMO during the innate response to viral infection leading to the activation of TBK1. Positively regulates LPS-mediated inflammatory innate immune response by catalyzing the 'Lys-11'-linked polyubiquitination of TAB1 to enhance its activation and subsequent NF-kappa-B and MAPK signaling. In a manner independent of its catalytic activity, inhibits WWP2, a SOX2-directed E3 ubiquitin ligase, and thus protects SOX2 from polyubiquitination and proteasomal degradation. Ubiquitinates the histone acetyltransferase protein complex component PHF20 and thereby triggers its degradation in the nucleus after its recruitment by the histone demethylase KDM6B, serving as a scaffold protein. Upon induction by TGF-beta, ubiquitinates the TFIID component TAF7 for proteasomal degradation. Induces ferroptosis by ubiquitinating SLC7A11, a critical protein for lipid reactive oxygen species (ROS) scavenging. Inhibits directly hepatitis B virus replication by mediating HBX ubiquitination and subsequent degradation. Its function is as follows. (Microbial infection) Promotes herpes simplex virus type 2/HHV-2 infection in vaginal epithelial cells by decreasing the nuclear localization of IRF3, the primary mediator of type I interferon activation. The sequence is that of Tripartite motif-containing protein 26 (TRIM26) from Homo sapiens (Human).